We begin with the raw amino-acid sequence, 361 residues long: MAGRSNIVVSATVRDALAAGAPVVALESTLIAHGLPRPRNRDVAVELEELARARGVTPATIAVIDGVPRVGLDEPDLRRIADDANVIKLSVRDLPVACATGWTGATTVASTALLAARVGIRLFATGGLGGVHRGAGDSFDESADLVTLAAMPITVVSAGVKSILDIGATLERLETLGITVVGYRTSTFPGFYLPHTTYDLDWRVGDAGQVAATMAAADLLGLTSAIVVANPLPTDQALDPALHDRVLADALAWATERGIRGKAVTPFLLETFHRETGGASLEVNINAVRNNVAVASDIALAWAAKDRSPTDPAAPDPTAPDPAAPDPTAPDPAAPDSAAPDLAGPDPSAPDPAAVARAHRP.

Residue glutamate 27 is the Proton donor of the active site. Lysine 88 and valine 108 together coordinate substrate. Aspartate 140 serves as a coordination point for Mn(2+). 142-144 (SAD) provides a ligand contact to substrate. Lysine 161 functions as the Nucleophile in the catalytic mechanism. A disordered region spans residues 306 to 361 (DRSPTDPAAPDPTAPDPAAPDPTAPDPAAPDSAAPDLAGPDPSAPDPAAVARAHRP). Over residues 312 to 333 (PAAPDPTAPDPAAPDPTAPDPA) the composition is skewed to pro residues. A compositionally biased stretch (low complexity) spans 334–354 (APDSAAPDLAGPDPSAPDPAA).

This sequence belongs to the pseudouridine-5'-phosphate glycosidase family. In terms of assembly, homotrimer. Requires Mn(2+) as cofactor.

It catalyses the reaction D-ribose 5-phosphate + uracil = psi-UMP + H2O. Functionally, catalyzes the reversible cleavage of pseudouridine 5'-phosphate (PsiMP) to ribose 5-phosphate and uracil. Functions biologically in the cleavage direction, as part of a pseudouridine degradation pathway. This is Pseudouridine-5'-phosphate glycosidase from Frankia alni (strain DSM 45986 / CECT 9034 / ACN14a).